A 422-amino-acid chain; its full sequence is Glucosylglycerol-phosphate phosphatase (422 aa).

The active-site Proton donor is Asp403.

This sequence belongs to the histidine acid phosphatase family. In terms of assembly, monomer. Interacts with GGPS.

It carries out the reaction 2-O-(alpha-D-glucopyranosyl)-sn-glycerol 3-phosphate + H2O = 2-O-(alpha-D-glucopyranosyl)glycerol + phosphate. In terms of biological role, phosphorylates glucosylglycerol-phosphate the precursor of the osmoprotectant glucosylglycerol necessary for salt adaptation of Synechocystis. The sequence is that of Glucosylglycerol-phosphate phosphatase (stpA) from Synechocystis sp. (strain ATCC 27184 / PCC 6803 / Kazusa).